We begin with the raw amino-acid sequence, 425 residues long: Sucrose-phosphatase 1 (425 aa).

This sequence belongs to the sucrose phosphatase family. As to quaternary structure, homodimer. Mg(2+) is required as a cofactor.

It carries out the reaction sucrose 6(F)-phosphate + H2O = sucrose + phosphate. It participates in glycan biosynthesis; sucrose biosynthesis; sucrose from D-fructose 6-phosphate and UDP-alpha-D-glucose: step 2/2. With respect to regulation, inhibited by EDTA. Its function is as follows. Catalyzes the final step of sucrose synthesis. This is Sucrose-phosphatase 1 (SPP1) from Nicotiana tabacum (Common tobacco).